The chain runs to 96 residues: Muconolactone Delta-isomerase 1 (96 aa).

The protein belongs to the muconolactone Delta-isomerase family. As to quaternary structure, homodecamer.

The catalysed reaction is (S)-muconolactone = (4,5-dihydro-5-oxofuran-2-yl)-acetate. It participates in aromatic compound metabolism; beta-ketoadipate pathway; 5-oxo-4,5-dihydro-2-furylacetate from catechol: step 3/3. The protein is Muconolactone Delta-isomerase 1 (catC1) of Acinetobacter lwoffii.